Consider the following 213-residue polypeptide: 5-methylthioribulose-1-phosphate/5-deoxyribulose-1-phosphate aldolase (213 aa).

Glu73 functions as the Proton donor/acceptor in the catalytic mechanism. Positions 73, 92, 94, and 155 each coordinate Co(2+).

It belongs to the aldolase class II family. Co(2+) is required as a cofactor.

It carries out the reaction 5-(methylsulfanyl)-D-ribulose 1-phosphate = 2-(methylsulfanyl)acetaldehyde + dihydroxyacetone phosphate. It catalyses the reaction 5-deoxy-D-ribulose 1-phosphate = dihydroxyacetone phosphate + acetaldehyde. It participates in amino-acid biosynthesis; L-methionine biosynthesis via salvage pathway. In terms of biological role, uses 5-methylthioribulose-1-phosphate to yield 2-(methylthio)acetaldehyde and dihydroxyacetone phosphate. Can also use 5-deoxyribulose 1-phosphate to yield acetaldehyde and dihydroxyacetone phosphate. Part of a bifunctional DHAP-shunt salvage pathway for SAM by-products. This chain is 5-methylthioribulose-1-phosphate/5-deoxyribulose-1-phosphate aldolase, found in Escherichia coli O45:K1 (strain S88 / ExPEC).